The chain runs to 61 residues: Small ribosomal subunit protein uS14 (61 aa).

Residues Cys-24, Cys-27, Cys-40, and Cys-43 each contribute to the Zn(2+) site.

The protein belongs to the universal ribosomal protein uS14 family. Zinc-binding uS14 subfamily. As to quaternary structure, part of the 30S ribosomal subunit. Contacts proteins S3 and S10. Zn(2+) is required as a cofactor.

Binds 16S rRNA, required for the assembly of 30S particles and may also be responsible for determining the conformation of the 16S rRNA at the A site. This is Small ribosomal subunit protein uS14 from Rhodopirellula baltica (strain DSM 10527 / NCIMB 13988 / SH1).